A 365-amino-acid polypeptide reads, in one-letter code: c-di-GMP synthase (365 aa).

It belongs to the CD-NTase family. E subfamily.

The enzyme catalyses 2 GTP = 3',3'-c-di-GMP + 2 diphosphate. Its function is as follows. Cyclic nucleotide synthase (second messenger synthase) of a CBASS antivirus system. CBASS (cyclic oligonucleotide-based antiphage signaling system) provides immunity against bacteriophage. The CD-NTase protein synthesizes cyclic nucleotides in response to infection; these serve as specific second messenger signals. The signals activate a diverse range of effectors, leading to bacterial cell death and thus abortive phage infection. A type I-D(GG) CBASS system. Functionally, cyclic dinucleotide synthase that catalyzes the synthesis of c-di-GMP, has no activity with other NTP substrates. The chain is c-di-GMP synthase from Flavobacteriaceae sp. genome_bin_11.